Here is a 172-residue protein sequence, read N- to C-terminus: RNA silencing suppressor p19 (172 aa).

Positions 1–15 are enriched in basic and acidic residues; that stretch reads MERAIQGNDAREQAY. The interval 1 to 38 is disordered; sequence MERAIQGNDAREQAYGERWNGGPGGSTSPFQLPDESPS.

Belongs to the tombusvirus protein p19 family. As to quaternary structure, homodimer.

Functionally, viral suppressor of RNA silencing which binds specifically to silencing RNAs (siRNAs). Acts as a molecular caliper to specifically select siRNAs based on the length of the duplex region of the RNA. The chain is RNA silencing suppressor p19 from Tomato bushy stunt virus (strain A23) (TBSV).